The sequence spans 501 residues: Envelope glycoprotein C homolog (501 aa).

An N-terminal signal peptide occupies residues 1 to 27 (MLTPRVLRALGWTGLFFLLLSPSNVLG). At 28–465 (ASLSRDLETP…DATPSARGTP (438 aa)) the chain is on the virion surface side. The N-linked (GlcNAc...) asparagine; by host glycan is linked to asparagine 46. The disordered stretch occupies residues 53-86 (PLTEVPHAPSTESVSTNSESTNEHTITETTGKNA). A compositionally biased stretch (low complexity) spans 62–72 (STESVSTNSES). Residues asparagine 91, asparagine 100, asparagine 120, asparagine 212, asparagine 354, asparagine 400, and asparagine 429 are each glycosylated (N-linked (GlcNAc...) asparagine; by host). The Ig-like domain occupies 258-356 (PASVDVLAPP…GDMISTTNAT (99 aa)). Residues 466–492 (MVITVTAVLGLAVILGMGIIMTALCLY) traverse the membrane as a helical segment. Over 493 to 501 (NSTRKNIRL) the chain is Cytoplasmic.

It belongs to the herpesviridae glycoprotein C family.

Its subcellular location is the secreted. It localises to the host cell membrane. Functionally, may play an immunoevasive role in the pathogenesis of Marek's disease. It is a candidate for causing the early-stage immunosuppression that occurs after MDHV infection. The protein is Envelope glycoprotein C homolog (gC) of Gallus gallus (Chicken).